A 673-amino-acid chain; its full sequence is Mechanosensitive ion channel protein 2, chloroplastic (673 aa).

The transit peptide at 1 to 75 (MALYGTLQLS…SVPCRTTAFR (75 aa)) directs the protein to the chloroplast. The next 5 helical transmembrane spans lie at 107-127 (FPFV…LWGL), 152-172 (YHVM…LFIC), 193-213 (LNFV…SSLI), 240-260 (ALYS…LGFS), and 264-284 (WLTA…EILT). A disordered region spans residues 492 to 673 (KINGEDKSKS…QPNSGASTEP (182 aa)). 3 stretches are compositionally biased toward basic and acidic residues: residues 510–525 (AEQE…KETS), 564–576 (TPKD…TEKP), and 617–642 (GSKR…ELTG). Residue Ser-571 is modified to Phosphoserine. A compositionally biased stretch (polar residues) spans 661 to 673 (SQSQPNSGASTEP).

This sequence belongs to the MscS (TC 1.A.23) family. As to expression, widely expressed.

It localises to the plastid. The protein resides in the chloroplast membrane. Functionally, mechanosensitive channel that opens in response to stretch forces in the membrane lipid bilayer. Controls plastid size, shape, and perhaps division during normal plant development by altering ion flux in response to changes in membrane tension. Acts as a component of the chloroplast division machinery. This is Mechanosensitive ion channel protein 2, chloroplastic (MSL2) from Arabidopsis thaliana (Mouse-ear cress).